A 430-amino-acid polypeptide reads, in one-letter code: tRNA(Ile)-lysidine synthase (430 aa).

24 to 29 (SGGLDS) is an ATP binding site.

It belongs to the tRNA(Ile)-lysidine synthase family.

The protein resides in the cytoplasm. It catalyses the reaction cytidine(34) in tRNA(Ile2) + L-lysine + ATP = lysidine(34) in tRNA(Ile2) + AMP + diphosphate + H(+). Ligates lysine onto the cytidine present at position 34 of the AUA codon-specific tRNA(Ile) that contains the anticodon CAU, in an ATP-dependent manner. Cytidine is converted to lysidine, thus changing the amino acid specificity of the tRNA from methionine to isoleucine. This is tRNA(Ile)-lysidine synthase from Haemophilus influenzae (strain PittGG).